A 147-amino-acid chain; its full sequence is Hemoglobin subunit beta (147 aa).

One can recognise a Globin domain in the interval 3 to 147 (EWTDFERATI…VVSSLGRQYH (145 aa)). The heme b site is built by His64 and His93.

The protein belongs to the globin family. As to quaternary structure, hb 1 is a heterotetramer of two alpha-1 and two beta chains. Hb 2 is a heterotetramer of two alpha-2 and two beta chains. In terms of tissue distribution, red blood cells.

Involved in oxygen transport from gills to the various peripheral tissues. The sequence is that of Hemoglobin subunit beta (hbb) from Cottoperca gobio (Frogmouth).